A 338-amino-acid polypeptide reads, in one-letter code: Large ribosomal subunit protein uL10 (338 aa).

The tract at residues 297-338 (PSAQQTQTQQSTAEEKKEEKKEEEKKGPSEEEIGSGLASLFG) is disordered. Residues 298 to 308 (SAQQTQTQQST) are compositionally biased toward low complexity. Basic and acidic residues predominate over residues 309-325 (AEEKKEEKKEEEKKGPS).

The protein belongs to the universal ribosomal protein uL10 family. Part of the 50S ribosomal subunit. Forms part of the ribosomal stalk which helps the ribosome interact with GTP-bound translation factors. Forms a heptameric L10(L12)2(L12)2(L12)2 complex, where L10 forms an elongated spine to which the L12 dimers bind in a sequential fashion.

Its function is as follows. Forms part of the ribosomal stalk, playing a central role in the interaction of the ribosome with GTP-bound translation factors. In Saccharolobus islandicus (strain Y.N.15.51 / Yellowstone #2) (Sulfolobus islandicus), this protein is Large ribosomal subunit protein uL10.